We begin with the raw amino-acid sequence, 1577 residues long: Dynamin-binding protein (1577 aa).

N-acetylmethionine is present on M1. SH3 domains are found at residues 2-61 (EPGS…IVTI), 66-126 (EGER…ELCL), and 145-204 (YSMG…LLGP). The interval 209–242 (DESVNAGSGDDSTLNDEVDVSPEEVESEGDEDDQ) is disordered. A compositionally biased stretch (acidic residues) spans 221 to 242 (TLNDEVDVSPEEVESEGDEDDQ). The SH3 4 domain occupies 243–302 (QAGTYGIALYRFQALESNELDFEVGDKIRILGTLEDGWLEGRLKGKTGIFPHRFVKLCPS). Disordered regions lie at residues 307–361 (ETMA…EEPL) and 375–437 (GQDE…SRQC). The segment covering 400–410 (PDLSQEVNGIS) has biased composition (polar residues). At S494 the chain carries Phosphoserine. Disordered stretches follow at residues 519–547 (PERP…DNLD) and 590–681 (RGSS…SEYT). A compositionally biased stretch (low complexity) spans 617 to 626 (TPTSTSPHLL). A compositionally biased stretch (pro residues) spans 632–651 (KPGPPLVVRPSRPAPLPPPT). Over residues 652–662 (QQRLNTASPKP) the composition is skewed to polar residues. Positions 672-681 (APEKEGSEYT) are enriched in basic and acidic residues. S684 carries the phosphoserine modification. Positions 705–755 (LDMHTRAQEELNLLLEEKQDESLRAETLETLKSYESTIQSLNLELQQLREM) form a coiled coil. The DH domain occupies 784–967 (KRAKVVAELL…KEINANINEY (184 aa)). The 210-residue stretch at 1008-1217 (LKHLTGFAPQ…LKASDREGNL (210 aa)) folds into the BAR domain. The SH3 5 domain occupies 1285–1348 (PPEKLFHVQR…YSSFLKPYNP (64 aa)). A compositionally biased stretch (low complexity) spans 1353–1375 (SDSSVVSHSSTESEHSGSSPSFH). 2 disordered regions span residues 1353–1381 (SDSS…NSSS) and 1415–1510 (ETLG…LGSS). Composition is skewed to polar residues over residues 1418–1428 (GVSSNTGNPET) and 1484–1497 (DQGS…SRAC). The 64-residue stretch at 1513-1576 (EGNQVYFAIY…PSNYIRKTEY (64 aa)) folds into the SH3 6 domain.

Binds DNM1 via its N-terminal SH3 domains. The C-terminal SH3 domain binds a complex containing actin, tubulin, Hsp70 and actin-regulatory proteins, such as ENAH, EVL, WIRE, CR16, WAVE1 and NAP1L1. Interacts with FASLG. Interacts (via SH3 domain 6) with WASL. Interacts (via SH3 domain 6) interacts with ENAH. Interacts (via C-terminal domain) with TJP1; required for the apical cell-cell junction localization of DNMBP. In terms of tissue distribution, widely expressed.

Its subcellular location is the cytoplasm. It is found in the golgi apparatus. The protein resides in the golgi stack. The protein localises to the cytoskeleton. It localises to the synapse. Its subcellular location is the cell junction. Its function is as follows. Plays a critical role as a guanine nucleotide exchange factor (GEF) for CDC42 in several intracellular processes associated with the actin and microtubule cytoskeleton. Regulates the structure of apical junctions in epithelial cells. Participates in the normal lumenogenesis of epithelial cell cysts by regulating spindle orientation. Plays a role in ciliogenesis. May play a role in membrane trafficking between the cell surface and the Golgi. The protein is Dynamin-binding protein of Rattus norvegicus (Rat).